Reading from the N-terminus, the 132-residue chain is Small ribosomal subunit protein uS8 (132 aa).

Belongs to the universal ribosomal protein uS8 family. Part of the 30S ribosomal subunit. Contacts proteins S5 and S12.

Its function is as follows. One of the primary rRNA binding proteins, it binds directly to 16S rRNA central domain where it helps coordinate assembly of the platform of the 30S subunit. This Arthrobacter sp. (strain FB24) protein is Small ribosomal subunit protein uS8.